The following is a 387-amino-acid chain: Chaperone protein DnaJ (387 aa).

One can recognise a J domain in the interval Asp6 to Gly70. The CR-type zinc-finger motif lies at Gly143–Arg225. 8 residues coordinate Zn(2+): Cys156, Cys159, Cys173, Cys176, Cys199, Cys202, Cys213, and Cys216. 4 CXXCXGXG motif repeats span residues Cys156–Gly163, Cys173–Gly180, Cys199–Gly206, and Cys213–Gly220.

It belongs to the DnaJ family. Homodimer. It depends on Zn(2+) as a cofactor.

It localises to the cytoplasm. Its function is as follows. Participates actively in the response to hyperosmotic and heat shock by preventing the aggregation of stress-denatured proteins and by disaggregating proteins, also in an autonomous, DnaK-independent fashion. Unfolded proteins bind initially to DnaJ; upon interaction with the DnaJ-bound protein, DnaK hydrolyzes its bound ATP, resulting in the formation of a stable complex. GrpE releases ADP from DnaK; ATP binding to DnaK triggers the release of the substrate protein, thus completing the reaction cycle. Several rounds of ATP-dependent interactions between DnaJ, DnaK and GrpE are required for fully efficient folding. Also involved, together with DnaK and GrpE, in the DNA replication of plasmids through activation of initiation proteins. This is Chaperone protein DnaJ from Lacticaseibacillus paracasei (strain ATCC 334 / BCRC 17002 / CCUG 31169 / CIP 107868 / KCTC 3260 / NRRL B-441) (Lactobacillus paracasei).